Reading from the N-terminus, the 152-residue chain is Keratin, high-sulfur matrix protein, B2C (152 aa).

Ala2 is modified (N-acetylalanine). 3 consecutive repeats follow at residues 27–36, 37–46, and 47–56; these read STCSQTSCCQ, PTSIQTSCCQ, and PTCLQTSGCE.

Its function is as follows. The keratin products of mammalian epidermal derivatives such as wool and hair consist of microfibrils embedded in a rigid matrix of other proteins. The matrix proteins include the high-sulfur and high-tyrosine keratins, having molecular weights of 6-20 kDa, whereas the microfibrils contain the larger, low-sulfur keratins (40-56 kDa). This is Keratin, high-sulfur matrix protein, B2C from Ovis aries (Sheep).